We begin with the raw amino-acid sequence, 604 residues long: MRPDISNIPELPGVYLMKDISDNIIYIGKAKSLKKRVSQYFQSSKNHSSKTRAMVRKIADVDYIVTESEVAALILEANLVKKNRPHYNIDLKDDKRYPYVKVTVNTKFPKIFITRRRLMDGALYFGPYTNVKPVRQTLDMISQIFRIKRCNRRVDGKGKRACLNYHIDRCYAPCNGSITPEEYRNNVMEAVKLFKGETSGTIKELQEKMNIHAIAQEYESAAVIRDQIDALKSLSRQQTATAGNDDSDIIATASDDETVFVQIFYIRDGNMVGKADMSLSWGDATGNIARVTEEFIKQYYQDAPVPPEILVQYPIPEKELVIKWLSEKAARSVQIQVPQRGNKKRLMEMAEQNAQMTLEQSHLKQSDKEQALQALLQLRDALALSTLPAHIEGFDISNISGTDAVGSMVVFENGLPANSKYRHFNIKTVKGIDDFAMMAEVVKRRYTHQKAEKDKLPDLILIDGGPGQVSAAMGSLKELQLDIPLVGLAKRFEHIIVPKDGTDEVVILPHTSEALKVLMRVRDESHRFAVSSHRRRRTARLSHSELDTIPGIGASRKKALLNHFSSIEQIRHASVEELTAVEGISKGLAERIVAHFNKERVENQ.

In terms of domain architecture, GIY-YIG spans 10 to 89; the sequence is ELPGVYLMKD…VKKNRPHYNI (80 aa). The UVR domain occupies 199–234; sequence SGTIKELQEKMNIHAIAQEYESAAVIRDQIDALKSL.

Belongs to the UvrC family. As to quaternary structure, interacts with UvrB in an incision complex.

It is found in the cytoplasm. Its function is as follows. The UvrABC repair system catalyzes the recognition and processing of DNA lesions. UvrC both incises the 5' and 3' sides of the lesion. The N-terminal half is responsible for the 3' incision and the C-terminal half is responsible for the 5' incision. This is UvrABC system protein C from Methanococcoides burtonii (strain DSM 6242 / NBRC 107633 / OCM 468 / ACE-M).